The sequence spans 350 residues: Ion-translocating oxidoreductase complex subunit D (350 aa).

A run of 4 helical transmembrane segments spans residues Tyr37–Ala57, Ala68–Ala88, Ile89–Val109, and Ile120–Thr140. Thr185 bears the FMN phosphoryl threonine mark. 5 helical membrane passes run Gly212–Leu232, Trp239–Leu259, Val265–Thr285, Ala291–Ile311, and Gly315–Ile335.

This sequence belongs to the NqrB/RnfD family. As to quaternary structure, the complex is composed of six subunits: RnfA, RnfB, RnfC, RnfD, RnfE and RnfG. The cofactor is FMN.

It is found in the cell inner membrane. Part of a membrane-bound complex that couples electron transfer with translocation of ions across the membrane. The protein is Ion-translocating oxidoreductase complex subunit D of Shewanella pealeana (strain ATCC 700345 / ANG-SQ1).